Here is a 178-residue protein sequence, read N- to C-terminus: Large ribosomal subunit protein bL25 (178 aa).

It belongs to the bacterial ribosomal protein bL25 family. CTC subfamily. Part of the 50S ribosomal subunit; part of the 5S rRNA/L5/L18/L25 subcomplex. Contacts the 5S rRNA. Binds to the 5S rRNA independently of L5 and L18.

This is one of the proteins that binds to the 5S RNA in the ribosome where it forms part of the central protuberance. This is Large ribosomal subunit protein bL25 from Campylobacter jejuni subsp. jejuni serotype O:23/36 (strain 81-176).